The primary structure comprises 64 residues: Large ribosomal subunit protein bL35 (64 aa).

It belongs to the bacterial ribosomal protein bL35 family.

The polypeptide is Large ribosomal subunit protein bL35 (Shewanella putrefaciens (strain CN-32 / ATCC BAA-453)).